A 538-amino-acid polypeptide reads, in one-letter code: Zinc finger protein with KRAB and SCAN domains 3 (538 aa).

Ser42 is modified (phosphoserine). In terms of domain architecture, SCAN box spans 46–128; that stretch reads RERFRGFRYP…VLLEYLERQL (83 aa). Residue Lys171 forms a Glycyl lysine isopeptide (Lys-Gly) (interchain with G-Cter in SUMO2) linkage. Thr207 carries the post-translational modification Phosphothreonine. The region spanning 214-274 is the KRAB domain; that stretch reads LKVEDVALTL…PAEELPEKEH (61 aa). A compositionally biased stretch (polar residues) spans 226 to 236; sequence EWTQQDSSQGN. The tract at residues 226 to 274 is disordered; that stretch reads EWTQQDSSQGNLCRDEKQENHGSLVSLGDEKQTKSRDLPPAEELPEKEH. Basic and acidic residues predominate over residues 253-274; sequence GDEKQTKSRDLPPAEELPEKEH. C2H2-type zinc fingers lie at residues 314-336, 342-364, 370-392, 398-420, and 426-448; these read HICHECGKSFAQSSGLSKHRRIH, YECEECGKAFIGSSALVIHQRVH, YECEECGKAFSHSSDLIKHQRTH, YECDDCGKTFSQSCSLLEHHRIH, and YQCSMCGKAFRRSSHLLRHQRIH. Thr449 carries the post-translational modification Phosphothreonine. 2 C2H2-type zinc fingers span residues 480-502 and 508-530; these read YKCNECERSFTQNTGLIEHQKIH and YQCNACGKGFTRISYLVQHQRSH.

It belongs to the krueppel C2H2-type zinc-finger protein family.

Its subcellular location is the nucleus. It is found in the cytoplasm. Transcriptional factor that binds to the consensus sequence 5'-[GT][AG][AGT]GGGG-3' and acts as a repressor of autophagy. Specifically represses expression of genes involved in autophagy and lysosome biogenesis/function such as MAP1LC3B, ULK1 or WIPI2. Associates with chromatin at the ITGB4 and VEGF promoters. Also acts as a transcription activator and promotes cancer cell progression and/or migration in various tumors and myelomas. The chain is Zinc finger protein with KRAB and SCAN domains 3 (ZKSCAN3) from Homo sapiens (Human).